The primary structure comprises 56 residues: uncharacterized protein (56 aa).

This is an uncharacterized protein from Saccharomyces cerevisiae (strain ATCC 204508 / S288c) (Baker's yeast).